Consider the following 152-residue polypeptide: Ribosomal RNA large subunit methyltransferase H (152 aa).

Residues Leu-68, Gly-100, and 119-124 (LGVMTW) each bind S-adenosyl-L-methionine.

The protein belongs to the RNA methyltransferase RlmH family. In terms of assembly, homodimer.

Its subcellular location is the cytoplasm. It carries out the reaction pseudouridine(1915) in 23S rRNA + S-adenosyl-L-methionine = N(3)-methylpseudouridine(1915) in 23S rRNA + S-adenosyl-L-homocysteine + H(+). In terms of biological role, specifically methylates the pseudouridine at position 1915 (m3Psi1915) in 23S rRNA. The protein is Ribosomal RNA large subunit methyltransferase H of Rhodospirillum rubrum (strain ATCC 11170 / ATH 1.1.1 / DSM 467 / LMG 4362 / NCIMB 8255 / S1).